The primary structure comprises 107 residues: uncharacterized protein (107 aa).

Its subcellular location is the mitochondrion. This is an uncharacterized protein from Arabidopsis thaliana (Mouse-ear cress).